The chain runs to 210 residues: Putative cutinase (210 aa).

Over residues 26–38 the composition is skewed to basic and acidic residues; the sequence is DSERLPLKRDEPG. Residues 26 to 58 form a disordered region; it reads DSERLPLKRDEPGSRSMRSTFIPSSQCSNLSSA. The segment covering 49–58 has biased composition (low complexity); it reads SSQCSNLSSA.

The catalysed reaction is cutin + H2O = cutin monomers.. In Phytophthora capsici, this protein is Putative cutinase.